A 659-amino-acid chain; its full sequence is Mannosyl-oligosaccharide 1,2-alpha-mannosidase IA (659 aa).

The Cytoplasmic segment spans residues 1–48; it reads MPVGGLLPLFSSPAGGGLGGGLGGGLGGGGGGGGRKGSGPSAFRLTEK. The chain crosses the membrane as a helical; Signal-anchor for type II membrane protein span at residues 49–69; the sequence is FVLLLVFSAFITLCFGAIFFL. The Lumenal portion of the chain corresponds to 70–659; sequence PDSSKLLSGV…NIKKVEDNEK (590 aa). Residues 88 to 121 form a disordered region; that stretch reads QPAADHKPGPGARAEDAADGRARPGEEGAPGDPA. Positions 91 to 113 are enriched in basic and acidic residues; the sequence is ADHKPGPGARAEDAADGRARPGE. Cysteines 482 and 514 form a disulfide. The active-site Proton donor is E528. Position 639 (T639) interacts with Ca(2+).

Belongs to the glycosyl hydrolase 47 family. The cofactor is Ca(2+).

It is found in the endoplasmic reticulum membrane. It catalyses the reaction N(4)-(alpha-D-Man-(1-&gt;2)-alpha-D-Man-(1-&gt;2)-alpha-D-Man-(1-&gt;3)-[alpha-D-Man-(1-&gt;2)-alpha-D-Man-(1-&gt;3)-[alpha-D-Man-(1-&gt;2)-alpha-D-Man-(1-&gt;6)]-alpha-D-Man-(1-&gt;6)]-beta-D-Man-(1-&gt;4)-beta-D-GlcNAc-(1-&gt;4)-beta-D-GlcNAc)-L-asparaginyl-[protein] (N-glucan mannose isomer 9A1,2,3B1,2,3) + 4 H2O = N(4)-(alpha-D-Man-(1-&gt;3)-[alpha-D-Man-(1-&gt;3)-[alpha-D-Man-(1-&gt;6)]-alpha-D-Man-(1-&gt;6)]-beta-D-Man-(1-&gt;4)-beta-D-GlcNAc-(1-&gt;4)-beta-D-GlcNAc)-L-asparaginyl-[protein] (N-glucan mannose isomer 5A1,2) + 4 beta-D-mannose. The enzyme catalyses N(4)-(alpha-D-Man-(1-&gt;2)-alpha-D-Man-(1-&gt;2)-alpha-D-Man-(1-&gt;3)-[alpha-D-Man-(1-&gt;3)-[alpha-D-Man-(1-&gt;2)-alpha-D-Man-(1-&gt;6)]-alpha-D-Man-(1-&gt;6)]-beta-D-Man-(1-&gt;4)-beta-D-GlcNAc-(1-&gt;4)-beta-D-GlcNAc)-L-asparaginyl-[protein] (N-glucan mannose isomer 8A1,2,3B1,3) + 3 H2O = N(4)-(alpha-D-Man-(1-&gt;3)-[alpha-D-Man-(1-&gt;3)-[alpha-D-Man-(1-&gt;6)]-alpha-D-Man-(1-&gt;6)]-beta-D-Man-(1-&gt;4)-beta-D-GlcNAc-(1-&gt;4)-beta-D-GlcNAc)-L-asparaginyl-[protein] (N-glucan mannose isomer 5A1,2) + 3 beta-D-mannose. It participates in protein modification; protein glycosylation. Its activity is regulated as follows. Inhibited by both 1-deoxymannojirimycin and kifunensine. In terms of biological role, involved in the maturation of Asn-linked oligosaccharides. Progressively trim alpha-1,2-linked mannose residues from Man(9)GlcNAc(2) to produce Man(5)GlcNAc(2). In Sus scrofa (Pig), this protein is Mannosyl-oligosaccharide 1,2-alpha-mannosidase IA (MAN1A1).